A 1161-amino-acid chain; its full sequence is Nardilysin (1161 aa).

Residues 1-18 form the signal peptide; sequence MLRRVAVAAVCVTGRKLR. 2 disordered regions span residues 49-103 and 130-218; these read MPGR…IIKS and VEGK…KKTT. A phosphoserine mark is found at Ser85, Ser91, and Ser93. Acidic residues predominate over residues 138-209; sequence TDEEEEEEEE…EENELEELEE (72 aa). His244 serves as a coordination point for Zn(2+). Glu247 (proton acceptor) is an active-site residue. The Zn(2+) site is built by His248 and Glu325.

It belongs to the peptidase M16 family. In terms of assembly, interacts with BACE1 and NRG1. The cofactor is Zn(2+). In terms of tissue distribution, highly expressed in brain of early postnatal mice but expressed at a lower level in the brains of adult mice. Expression is high in cortical neurons, and lower in neurons in the striatum. Very low expression detected in the corpus callosum. Also expressed in the gray matter in spinal cord and dorsal root ganglia.

It localises to the mitochondrion. Its subcellular location is the cell projection. The protein localises to the dendrite. It catalyses the reaction Hydrolysis of polypeptides, preferably at -Xaa-|-Arg-Lys-, and less commonly at -Arg-|-Arg-Xaa-, in which Xaa is not Arg or Lys.. Functionally, cleaves peptide substrates on the N-terminus of arginine residues in dibasic pairs. Is a critical activator of BACE1- and ADAM17-mediated pro-neuregulin ectodomain shedding, involved in the positive regulation of axonal maturation and myelination. Required for proper functioning of 2-oxoglutarate dehydrogenase (OGDH). This is Nardilysin from Mus musculus (Mouse).